A 244-amino-acid chain; its full sequence is Krueppel-like factor 9 (244 aa).

A disordered region spans residues Ser80–Arg142. Position 122 is a phosphoserine (Ser122). C2H2-type zinc fingers lie at residues His143–His167, Phe173–His197, and Phe203–His225.

The protein belongs to the Sp1 C2H2-type zinc-finger protein family. As to quaternary structure, interacts with ZZEF1. In terms of tissue distribution, epidermis (at protein level).

Its subcellular location is the nucleus. Its function is as follows. Transcription factor that binds to GC box promoter elements. Selectively activates mRNA synthesis from genes containing tandem repeats of GC boxes but represses genes with a single GC box. Acts as an epidermal circadian transcription factor regulating keratinocyte proliferation. The polypeptide is Krueppel-like factor 9 (KLF9) (Homo sapiens (Human)).